A 411-amino-acid polypeptide reads, in one-letter code: Flavohemoprotein (411 aa).

In terms of domain architecture, Globin spans 5-142; it reads TLSQETKQIV…IADVFIQVEK (138 aa). His89 contacts heme b. Catalysis depends on charge relay system residues Tyr99 and Glu141. The reductase stretch occupies residues 153–411; it reads GGWREFRSFV…FGPAGTLASS (259 aa). The FAD-binding FR-type domain maps to 156–267; it reads REFRSFVVEK…TAPAGDFTLQ (112 aa). FAD contacts are provided by residues Tyr194 and 210 to 213; that span reads RQYS. Residue 280–285 coordinates NADP(+); that stretch reads GVGITP. 401–404 lines the FAD pocket; the sequence is FFGP.

The protein belongs to the globin family. Two-domain flavohemoproteins subfamily. In the C-terminal section; belongs to the flavoprotein pyridine nucleotide cytochrome reductase family. Heme b is required as a cofactor. It depends on FAD as a cofactor.

The catalysed reaction is 2 nitric oxide + NADPH + 2 O2 = 2 nitrate + NADP(+) + H(+). It catalyses the reaction 2 nitric oxide + NADH + 2 O2 = 2 nitrate + NAD(+) + H(+). Its function is as follows. Is involved in NO detoxification in an aerobic process, termed nitric oxide dioxygenase (NOD) reaction that utilizes O(2) and NAD(P)H to convert NO to nitrate, which protects the bacterium from various noxious nitrogen compounds. Therefore, plays a central role in the inducible response to nitrosative stress. In Halalkalibacterium halodurans (strain ATCC BAA-125 / DSM 18197 / FERM 7344 / JCM 9153 / C-125) (Bacillus halodurans), this protein is Flavohemoprotein.